A 373-amino-acid chain; its full sequence is LIM domain-binding protein 1 (373 aa).

Disordered stretches follow at residues 248–297 (PPAE…LSSQ) and 329–373 (DAAN…QASQ). Residues 266–282 (SGGSTMSSGGGNTNNSN) show a composition bias toward low complexity. A compositionally biased stretch (polar residues) spans 288 to 297 (PASTFALSSQ). The LIM interaction domain (LID) domain maps to 298 to 337 (DVMVVGEPTLMGGEFGDEDERLITRLENTQFDAANGIDDE).

This sequence belongs to the LDB family. As to quaternary structure, forms homodimers and heterodimers. Interacts with and activates lhx1/lim1. The stoichiometry of lhx1/lim1 and ldb1 is important for their function and an excess of ldb1 can inhibit lhx1/lim1 function. When bound to lhx1/lim1, escapes degradation by rnf12. Interacts with the N-terminal region of rnf12. In terms of processing, undergoes rnf12-mediated ubiquitin-proteasome-dependent degradation.

It localises to the nucleus. Binds to the LIM domain of a wide variety of LIM domain-containing transcription factors. Acts as a coactivator together with otx2 to stimulate lhx1/lim1-mediated activation of the gsc promoter in the Spemann organizer. Acts synergistically with lhx1/lim1 and ssbp in axis formation. This is LIM domain-binding protein 1 from Xenopus tropicalis (Western clawed frog).